We begin with the raw amino-acid sequence, 217 residues long: Magnetosome protein MamA (217 aa).

TPR repeat units lie at residues 12 to 44, 46 to 79, 80 to 113, 114 to 147, 148 to 181, and 182 to 215; these read VTLYTHYGLSVAKKLGANMVDAFRSAFSVNDDI, QVYYRDKGISHAKAGRYSEAVVMLEQVYDADAFD, VEVALHLGIAYVKTGAVDRGTELLERSIADAPDN, IKVATVLGLTYVQVQKYDLAVPLLVKVAEANPVN, FNVRFRLGVALDNLGRFDEAIDSFKIALGLRPNE, and GKVHRAIAYSYEQMGSHEEALPHFKKANELDERS. An N-terminal domain region spans residues 41–112; the sequence is NDDIRQVYYR…LERSIADAPD (72 aa). The tract at residues 113-217 is C-terminal domain; sequence NIKVATVLGL…ANELDERSAV (105 aa).

It belongs to the magnetosome MamA family. As to quaternary structure, forms round, 20 nm diameter complexes with a central cavity. Probably binds MamC. Interacts with full-length Mms6.

The protein localises to the magnetosome membrane. Its function is as follows. Probably forms a large homooligomer on which other magnetosome subunits assemble. Required for formation of functional magnetosomes from pre-existing vesicles. The sequence is that of Magnetosome protein MamA from Magnetospirillum gryphiswaldense (strain DSM 6361 / JCM 21280 / NBRC 15271 / MSR-1).